Reading from the N-terminus, the 547-residue chain is Membrane protein insertase YidC (547 aa).

6 helical membrane passes run 6-26 (LILV…WQKY), 328-348 (VVDY…LEAI), 351-371 (LVGN…AVFF), 425-445 (LPIL…LGAV), 459-479 (LASA…MFVQ), and 499-519 (PLIF…YWVV).

This sequence belongs to the OXA1/ALB3/YidC family. Type 1 subfamily. As to quaternary structure, interacts with the Sec translocase complex via SecD. Specifically interacts with transmembrane segments of nascent integral membrane proteins during membrane integration.

Its subcellular location is the cell inner membrane. Functionally, required for the insertion and/or proper folding and/or complex formation of integral membrane proteins into the membrane. Involved in integration of membrane proteins that insert both dependently and independently of the Sec translocase complex, as well as at least some lipoproteins. Aids folding of multispanning membrane proteins. The sequence is that of Membrane protein insertase YidC from Dechloromonas aromatica (strain RCB).